Consider the following 523-residue polypeptide: NAD(P)H-quinone oxidoreductase subunit 2 (523 aa).

Transmembrane regions (helical) follow at residues 29–49 (AVAP…VDLA), 57–77 (WVPP…ALQW), 94–114 (LAIA…MISW), 128–148 (AGIL…TDLV), 182–202 (LLVG…LYGL), 223–243 (AALA…AVPF), 255–275 (PTPV…ALAL), 291–311 (LLFT…ALAQ), 317–337 (MLAY…VCGT), 345–365 (VLYT…IILF), 389–409 (LGLS…GFFG), 424–444 (VLVV…IGVI), and 477–497 (VALV…NPLF).

It belongs to the complex I subunit 2 family. NDH-1 can be composed of about 15 different subunits; different subcomplexes with different compositions have been identified which probably have different functions.

The protein localises to the cellular thylakoid membrane. It catalyses the reaction a plastoquinone + NADH + (n+1) H(+)(in) = a plastoquinol + NAD(+) + n H(+)(out). The enzyme catalyses a plastoquinone + NADPH + (n+1) H(+)(in) = a plastoquinol + NADP(+) + n H(+)(out). Functionally, NDH-1 shuttles electrons from an unknown electron donor, via FMN and iron-sulfur (Fe-S) centers, to quinones in the respiratory and/or the photosynthetic chain. The immediate electron acceptor for the enzyme in this species is believed to be plastoquinone. Couples the redox reaction to proton translocation, and thus conserves the redox energy in a proton gradient. Cyanobacterial NDH-1 also plays a role in inorganic carbon-concentration. The chain is NAD(P)H-quinone oxidoreductase subunit 2 from Synechococcus sp. (strain WH7803).